The primary structure comprises 193 residues: MADKKPTAENWPVVSGDYIVGDPESPVAVTTLASHNEDIPAAAGAAIAGPCKTENLGIEKVVANIISNPNIRFLILCGAEVQGHITGQSFKALYENGCDPEKKKITGATGAIPFVENIPMEGVERFQQQLELVDMIDNEDGGAITAKVKECIEKDPGAFEEDSLVIKIDEERYSKKSSFVESSSESEKIESEA.

Residues 1-38 lie on the Cytoplasmic side of the membrane; that stretch reads MADKKPTAENWPVVSGDYIVGDPESPVAVTTLASHNED. A helical membrane pass occupies residues 39 to 58; sequence IPAAAGAAIAGPCKTENLGI. Topologically, residues 59–193 are extracellular; sequence EKVVANIISN…SESEKIESEA (135 aa). Histidine 84 contacts 5-hydroxybenzimidazolylcob(I)amide. Positions 174–193 are disordered; it reads SKKSSFVESSSESEKIESEA.

The protein belongs to the MtrA family. As to quaternary structure, the complex is composed of 8 subunits; MtrA, MtrB, MtrC, MtrD, MtrE, MtrF, MtrG and MtrH. It depends on 5-hydroxybenzimidazolylcob(I)amide as a cofactor.

It is found in the cell membrane. It carries out the reaction 5-methyl-5,6,7,8-tetrahydromethanopterin + coenzyme M + 2 Na(+)(in) = 5,6,7,8-tetrahydromethanopterin + methyl-coenzyme M + 2 Na(+)(out). The protein operates within one-carbon metabolism; methanogenesis from CO(2); methyl-coenzyme M from 5,10-methylene-5,6,7,8-tetrahydromethanopterin: step 2/2. Functionally, part of a complex that catalyzes the formation of methyl-coenzyme M and tetrahydromethanopterin from coenzyme M and methyl-tetrahydromethanopterin. This is an energy-conserving, sodium-ion translocating step. In Methanobrevibacter ruminantium (strain ATCC 35063 / DSM 1093 / JCM 13430 / OCM 146 / M1) (Methanobacterium ruminantium), this protein is Tetrahydromethanopterin S-methyltransferase subunit A 2.